Consider the following 248-residue polypeptide: Probable transcriptional regulatory protein FTL_0929 (248 aa).

The protein belongs to the TACO1 family.

It localises to the cytoplasm. The protein is Probable transcriptional regulatory protein FTL_0929 of Francisella tularensis subsp. holarctica (strain LVS).